A 273-amino-acid chain; its full sequence is Shikimate dehydrogenase (NADP(+)) (273 aa).

Residues 15–17 (SKS) and Thr62 each bind shikimate. Catalysis depends on Lys66, which acts as the Proton acceptor. An NADP(+)-binding site is contributed by Glu78. Residues Asn87 and Asp103 each coordinate shikimate. NADP(+) contacts are provided by residues 127–131 (GAGGA), 150–155 (NRTQEK), and Met213. Residue Tyr215 coordinates shikimate. Position 237 (Gly237) interacts with NADP(+).

This sequence belongs to the shikimate dehydrogenase family. Homodimer.

The enzyme catalyses shikimate + NADP(+) = 3-dehydroshikimate + NADPH + H(+). The protein operates within metabolic intermediate biosynthesis; chorismate biosynthesis; chorismate from D-erythrose 4-phosphate and phosphoenolpyruvate: step 4/7. Functionally, involved in the biosynthesis of the chorismate, which leads to the biosynthesis of aromatic amino acids. Catalyzes the reversible NADPH linked reduction of 3-dehydroshikimate (DHSA) to yield shikimate (SA). The polypeptide is Shikimate dehydrogenase (NADP(+)) (Shewanella woodyi (strain ATCC 51908 / MS32)).